A 303-amino-acid polypeptide reads, in one-letter code: N-acetyl-D-glucosamine kinase (303 aa).

Residues Gly-4–Lys-11 and Gly-133–Phe-140 contribute to the ATP site. Zn(2+)-binding residues include His-157, Cys-177, Cys-179, and Cys-184.

The protein belongs to the ROK (NagC/XylR) family. NagK subfamily.

It catalyses the reaction N-acetyl-D-glucosamine + ATP = N-acetyl-D-glucosamine 6-phosphate + ADP + H(+). It participates in cell wall biogenesis; peptidoglycan recycling. Catalyzes the phosphorylation of N-acetyl-D-glucosamine (GlcNAc) derived from cell-wall degradation, yielding GlcNAc-6-P. The chain is N-acetyl-D-glucosamine kinase from Escherichia coli O81 (strain ED1a).